A 326-amino-acid polypeptide reads, in one-letter code: Cyclin-dependent kinase 6 (326 aa).

M1 carries the post-translational modification N-acetylmethionine. Phosphotyrosine is present on residues Y13 and Y24. One can recognise a Protein kinase domain in the interval 13 to 300 (YECVAEIGEG…AYSALSHPYF (288 aa)). ATP contacts are provided by residues 19-27 (IGEGAYGKV) and K43. 2 positions are modified to phosphothreonine: T49 and T70. Catalysis depends on D145, which acts as the Proton acceptor. The residue at position 177 (T177) is a Phosphothreonine. K264 bears the N6-acetyllysine mark. At T325 the chain carries Phosphothreonine.

The protein belongs to the protein kinase superfamily. CMGC Ser/Thr protein kinase family. CDC2/CDKX subfamily. As to quaternary structure, interaction with D-type G1 cyclins. Cyclin binding promotes enzyme activation by phosphorylation at Thr-177. Binds to RUNX1, CDKN2D, FBXO7 and CDKN2C/p18-INK4c. Forms a cytoplasmic complex with Hsp90/HSP90AB1 and CDC37. FBXO7-binding promotes D-type cyclin binding. Interacts with Kaposi's sarcoma herpesvirus (KSHV) V-cyclin and herpesvirus saimiri (V-cyclin/ECLF2); the CDK6/V-cyclin complex phosphorylates NPM1 and thus lead to viral reactivation by reducing viral LANA levels. In terms of processing, thr-177 phosphorylation and Tyr-24 dephosphorylation promotes kinase activity. Expressed ubiquitously. Accumulates in squamous cell carcinomas, proliferating hematopoietic progenitor cells, beta-cells of pancreatic islets of Langerhans, and neuroblastomas. Reduced levels in differentiating cells.

It localises to the cytoplasm. Its subcellular location is the nucleus. The protein resides in the cell projection. The protein localises to the ruffle. It is found in the cytoskeleton. It localises to the microtubule organizing center. Its subcellular location is the centrosome. The enzyme catalyses L-seryl-[protein] + ATP = O-phospho-L-seryl-[protein] + ADP + H(+). It catalyses the reaction L-threonyl-[protein] + ATP = O-phospho-L-threonyl-[protein] + ADP + H(+). With respect to regulation, inhibited by INK4 proteins (CDKN2C/p18-INK4c), aminopurvalanol, PD0332991, 4-(Pyrazol-4-yl)-pyrimidines and fisetin, a flavonol inhibitor. Activated by Thr-177 phosphorylation and Tyr-24 dephosphorylation. Stimulated by cyclin from herpesvirus saimiri (V-cyclin/ECLF2). Rapidly down-regulated prior to cell differentiation (e.g. erythroid and osteoblast). Serine/threonine-protein kinase involved in the control of the cell cycle and differentiation; promotes G1/S transition. Phosphorylates pRB/RB1 and NPM1. Interacts with D-type G1 cyclins during interphase at G1 to form a pRB/RB1 kinase and controls the entrance into the cell cycle. Involved in initiation and maintenance of cell cycle exit during cell differentiation; prevents cell proliferation and negatively regulates cell differentiation, but is required for the proliferation of specific cell types (e.g. erythroid and hematopoietic cells). Essential for cell proliferation within the dentate gyrus of the hippocampus and the subventricular zone of the lateral ventricles. Required during thymocyte development. Promotes the production of newborn neurons, probably by modulating G1 length. Promotes, at least in astrocytes, changes in patterns of gene expression, changes in the actin cytoskeleton including loss of stress fibers, and enhanced motility during cell differentiation. Prevents myeloid differentiation by interfering with RUNX1 and reducing its transcription transactivation activity, but promotes proliferation of normal myeloid progenitors. Delays senescence. Promotes the proliferation of beta-cells in pancreatic islets of Langerhans. May play a role in the centrosome organization during the cell cycle phases. This chain is Cyclin-dependent kinase 6 (CDK6), found in Homo sapiens (Human).